The primary structure comprises 847 residues: Glycogen phosphorylase, liver form (847 aa).

An N-acetylalanine modification is found at alanine 2. Phosphoserine; by PHK; in form phosphorylase a is present on serine 15. AMP contacts are provided by residues 43-45 (DRN), tyrosine 76, and arginine 310. Lysine 364 is subject to N6-succinyllysine. At lysine 470 the chain carries N6-acetyllysine. A phosphoserine mark is found at serine 524, serine 561, and serine 639. An N6-(pyridoxal phosphate)lysine modification is found at lysine 681. Lysine 796 is subject to N6-acetyllysine.

The protein belongs to the glycogen phosphorylase family. As to quaternary structure, homodimer; enzymatically active. Interacts with PPP1R3B; recruits the phosphatase PP1 which dephosphorylates and inactivates PYGL/glycogen phosphorylase. Pyridoxal 5'-phosphate is required as a cofactor. Acetylation, which is up-regulated by glucose and insulin and down-regulated by glucagon, inhibits the glycogen phosphorylase activity by promoting PPP1R3B-mediated recruitment of phosphatase PP1 and Ser-15 dephosphorylation. In terms of processing, phosphorylation at Ser-15 converts inactive phosphorylase b into active phosphorylase a. Dephosphorylation of Ser-15 by phosphatase PP1 inactivates the enzyme.

Its subcellular location is the cytoplasm. The protein localises to the cytosol. It catalyses the reaction [(1-&gt;4)-alpha-D-glucosyl](n) + phosphate = [(1-&gt;4)-alpha-D-glucosyl](n-1) + alpha-D-glucose 1-phosphate. Its activity is regulated as follows. Allosterically regulated through the non-covalent binding of metabolites, being activated by AMP and inhibited by ATP, ADP, and glucose-6-phosphate. The activity is also controlled by post-translational modifications including phosphorylation and acetylation. Functionally, allosteric enzyme that catalyzes the rate-limiting step in glycogen catabolism, the phosphorolytic cleavage of glycogen to produce glucose-1-phosphate, and plays a central role in maintaining cellular and organismal glucose homeostasis. The protein is Glycogen phosphorylase, liver form of Homo sapiens (Human).